Here is a 1480-residue protein sequence, read N- to C-terminus: MENSEDISLNSSEKSIESSVVNLEDQQQSQQQTQQQTCQKTFVQEAPELTILIDKLIQLKHSNKDELISNTTRIIYIIDQYLEQPTLLDIHLNDIIQPLINFIKSNYINNSNNNNTTTTTTTIMTETEIVIKKLSIKNSFRIIYVLSKVRGFKTIVKLFQHEAIDLLPVLDQLEISYHQWVNINKQRDRLNEISVSYSSGINLKNYIKPEEESEQEVVDENNNNINNNHNIDDEYNENIISWEEVYVLALWVSLLVIIPFKFSSLDSASSGTASAAGDGGDGDGDGQLKSISSRILKLGKLALSDVSKIRDSFSELLSKLLNRPDMKFEQKQFIKWCTNSIQLISNNNNNNNQNNSSNNNILLIIGIYSTLATMFKKGNRLDFLPIDMNLYEKIMEANKYLSLSGSERITKKIFLKLLQRIAIIMLPPVSASWRYQKIIKPLLLKGELIKQINNNNNNNNNENNNEEGEEEEEEIPEEIDEILEEIMKSLKDKDTIIRWTSAKAIGRIVNLLPKDMGDQVIGLVIDQMFEKNEFIDADPSAWHGGCLALAELARRGLLLPERLDVVVPLVIRALFFDIIKGTYSIGSHVRDSACYLCWALARTYHNSILSPYLLPICRNLVVVSLYDREINCRKSASAAFQEMVGRHQGLVPNGIEIVTSADFFTVGNKNNSFTSLTTFIGKFQIDYYPIVIKHLATIKIYNWDLEIRQLASKSIHLLTNINPNDIVSNYLPLIIPNTQSDLVHVKHGASLAISEILISLFENNNINLLSDNLKMMILMTIKNTKNEKLFKGKGGVLIRIGMCKIIYSICLVEFSLDKNLSEIKKPTESTSTNGNEDRAAALKLKIAMLKAKTASQINKPIITPPSSKSTTNNNNNNNNNNLNDNEIAFNIILGYLNENLNHPNEEVQKEASKAFELLFSKYISSNEKISLLLELIDSHCKTLKFDINRSARRGSSLLLGSLPFNSANLSYDLLSKVVNELILSIFQDDPKFKDIETRVNSISSLYKIGIYILNLIFKNQENEQKEEEDFKKSKNYNLFIKIWNCLGLATNDYSIDKRGDIGSWVRELSCKVLFDFIKFIITNQNSSTTTTTASTTDLSIENLINEKMITEFICKLFQLSGEKLDKIRDVACKIIHELLWIENPSSINNIPHKEELKKIIVKDQDVHFNWFRTEESLPLICKVLKFNCYLYPLLFGLFSSLGGTSKYLINDSIQSIKQYFSSFDNDEKERFEKIISFSKAILEITNNTTQRMIQPTFRSIYNLLSTHIFDFLIINNLNEQSIFETILFNCYQIIESNQDDIYLLLNSIELFSYFFIQFENNNNEYIKDYSLKALLLLLSNLKYPKVRKLASDQLKKSTRLFINNNGDDETPSLIKSLIFNTKWDDSVDLIIEPLKSLLLLLNQKHLLELLSENPTKKPIPLAPPITSIEELKDKIQNPHKQSDDNNNNNNGELINNNTENNNNNNFDDNLPEDSQDLMEI.

Disordered regions lie at residues 1–32 and 453–476; these read MENSEDISLNSSEKSIESSVVNLEDQQQSQQQ and NNNNNNNNNENNNEEGEEEEEEIP. 2 stretches are compositionally biased toward low complexity: residues 7–32 and 453–463; these read ISLNSSEKSIESSVVNLEDQQQSQQQ and NNNNNNNNNEN. Positions 464–476 are enriched in acidic residues; it reads NNEEGEEEEEEIP. An HEAT 1 repeat occupies 482–520; it reads ILEEIMKSLKDKDTIIRWTSAKAIGRIVNLLPKDMGDQV. A disordered region spans residues 859-880; the sequence is KPIITPPSSKSTTNNNNNNNNN. One copy of the HEAT 2 repeat lies at 886–922; sequence EIAFNIILGYLNENLNHPNEEVQKEASKAFELLFSKY. Residues 1437 to 1480 are disordered; the sequence is NPHKQSDDNNNNNNGELINNNTENNNNNNFDDNLPEDSQDLMEI. The segment covering 1444–1468 has biased composition (low complexity); sequence DNNNNNNGELINNNTENNNNNNFDD. Positions 1469–1480 are enriched in acidic residues; the sequence is NLPEDSQDLMEI.

This sequence belongs to the TBCD family. In terms of assembly, supercomplex made of cofactors A to E. Cofactors A and D function by capturing and stabilizing tubulin in a quasi-native conformation. Cofactor E binds to the cofactor D-tubulin complex; interaction with cofactor C then causes the release of tubulin polypeptides that are committed to the native state.

Tubulin-folding protein; involved in the first step of the tubulin folding pathway. In Dictyostelium discoideum (Social amoeba), this protein is Tubulin-specific chaperone D (tbcd).